Here is a 466-residue protein sequence, read N- to C-terminus: 3-isopropylmalate dehydratase large subunit (466 aa).

[4Fe-4S] cluster-binding residues include Cys-347, Cys-407, and Cys-410.

It belongs to the aconitase/IPM isomerase family. LeuC type 1 subfamily. In terms of assembly, heterodimer of LeuC and LeuD. Requires [4Fe-4S] cluster as cofactor.

The enzyme catalyses (2R,3S)-3-isopropylmalate = (2S)-2-isopropylmalate. Its pathway is amino-acid biosynthesis; L-leucine biosynthesis; L-leucine from 3-methyl-2-oxobutanoate: step 2/4. In terms of biological role, catalyzes the isomerization between 2-isopropylmalate and 3-isopropylmalate, via the formation of 2-isopropylmaleate. The sequence is that of 3-isopropylmalate dehydratase large subunit from Serratia proteamaculans (strain 568).